The sequence spans 219 residues: Chloramphenicol acetyltransferase (219 aa).

The Proton acceptor role is filled by His190.

Belongs to the chloramphenicol acetyltransferase family. As to quaternary structure, homotrimer.

It catalyses the reaction chloramphenicol + acetyl-CoA = chloramphenicol 3-acetate + CoA. This enzyme is an effector of chloramphenicol resistance in bacteria. The chain is Chloramphenicol acetyltransferase (catQ) from Clostridium perfringens.